The primary structure comprises 420 residues: Probable pectate lyase C (420 aa).

The first 20 residues, 1 to 20 (MKLSAPLLVSLAAFSQAVTA), serve as a signal peptide directing secretion. 3 N-linked (GlcNAc...) asparagine glycosylation sites follow: N49, N165, and N202. R205 is a catalytic residue. The 36-residue stretch at 262–297 (NANFHGYVDNNYYDPDKDGQLDGSELGVSSSNYGGM) folds into the EF-hand domain. Ca(2+)-binding residues include D275, D277, D279, Q281, and E286. The tract at residues 357 to 395 (ATMGGPGTLNGGTPAKDTDGDGIPDEAEKQLGTDPNTND) is disordered. N-linked (GlcNAc...) asparagine glycosylation occurs at N394.

It belongs to the polysaccharide lyase 1 family. Ca(2+) serves as cofactor.

It is found in the secreted. The catalysed reaction is Eliminative cleavage of (1-&gt;4)-alpha-D-galacturonan to give oligosaccharides with 4-deoxy-alpha-D-galact-4-enuronosyl groups at their non-reducing ends.. Its function is as follows. Pectinolytic enzyme consist of four classes of enzymes: pectin lyase, polygalacturonase, pectin methylesterase and rhamnogalacturonase. Among pectinolytic enzymes, pectin lyase is the most important in depolymerization of pectin, since it cleaves internal glycosidic bonds of highly methylated pectins. Favors pectate, the anion, over pectin, the methyl ester. The polypeptide is Probable pectate lyase C (plyC) (Neosartorya fischeri (strain ATCC 1020 / DSM 3700 / CBS 544.65 / FGSC A1164 / JCM 1740 / NRRL 181 / WB 181) (Aspergillus fischerianus)).